Consider the following 644-residue polypeptide: 2-isopropylmalate synthase (644 aa).

Residues 1 to 40 (MTTSESPDAYTESFGAHTIVKPAGPPRVGQPSWNPQRASS) form a disordered region. Over residues 31–40 (PSWNPQRASS) the composition is skewed to polar residues. A Pyruvate carboxyltransferase domain is found at 72-346 (PLWCAVDLRD…DPQIDFSNID (275 aa)). Residues aspartate 81, histidine 285, histidine 287, and asparagine 321 each contribute to the Mg(2+) site. A regulatory domain region spans residues 491–644 (PVRPLERIRQ…VVSAVNRAAR (154 aa)). One copy of the VNTR1 repeat lies at 575 to 593 (VTIASPAQPGEAGRHASDP). Residues 581–612 (AQPGEAGRHASDPVTIASPAQPGEAGRHASDP) are disordered. One copy of the VNTR2 repeat lies at 594 to 612 (VTIASPAQPGEAGRHASDP).

Belongs to the alpha-IPM synthase/homocitrate synthase family. LeuA type 2 subfamily. As to quaternary structure, homodimer. It depends on Mg(2+) as a cofactor.

The protein resides in the cytoplasm. It carries out the reaction 3-methyl-2-oxobutanoate + acetyl-CoA + H2O = (2S)-2-isopropylmalate + CoA + H(+). Its pathway is amino-acid biosynthesis; L-leucine biosynthesis; L-leucine from 3-methyl-2-oxobutanoate: step 1/4. Catalyzes the condensation of the acetyl group of acetyl-CoA with 3-methyl-2-oxobutanoate (2-ketoisovalerate) to form 3-carboxy-3-hydroxy-4-methylpentanoate (2-isopropylmalate). This is 2-isopropylmalate synthase from Mycobacterium tuberculosis (strain CDC 1551 / Oshkosh).